The sequence spans 834 residues: Mannosyl-oligosaccharide glucosidase (834 aa).

A compositionally biased stretch (basic residues) spans 1–10 (MARGERRRRA). Residues 1 to 36 (MARGERRRRAAAAEGARPLERARGAGRRDGRAGGAR) lie on the Cytoplasmic side of the membrane. The tract at residues 1–37 (MARGERRRRAAAAEGARPLERARGAGRRDGRAGGARG) is disordered. The Endoplasmic reticulum targeting signature appears at 3–9 (RGERRRR). The span at 17 to 31 (RPLERARGAGRRDGR) shows a compositional bias: basic and acidic residues. A helical; Signal-anchor for type II membrane protein transmembrane segment spans residues 37 to 57 (GSAGGAALAVVVLALAFGLSG). Over 58–834 (RWVLAWLGVR…LVLLIMAEEY (777 aa)) the chain is Lumenal. The segment at 74–136 (PAPSALPPDS…GTPPKLRHTC (63 aa)) is required for endoplasmic reticulum targeting. D580 serves as the catalytic Proton donor. N-linked (GlcNAc...) asparagine glycosylation is present at N654. E804 serves as the catalytic Proton acceptor.

This sequence belongs to the glycosyl hydrolase 63 family.

The protein resides in the endoplasmic reticulum membrane. The enzyme catalyses N(4)-(alpha-D-Glc-(1-&gt;2)-alpha-D-Glc-(1-&gt;3)-alpha-D-Glc-(1-&gt;3)-alpha-D-Man-(1-&gt;2)-alpha-D-Man-(1-&gt;2)-alpha-D-Man-(1-&gt;3)-[alpha-D-Man-(1-&gt;2)-alpha-D-Man-(1-&gt;3)-[alpha-D-Man-(1-&gt;2)-alpha-D-Man-(1-&gt;6)]-alpha-D-Man-(1-&gt;6)]-beta-D-Man-(1-&gt;4)-beta-D-GlcNAc-(1-&gt;4)-beta-D-GlcNAc)-L-asparaginyl-[protein] + H2O = N(4)-(alpha-D-Glc-(1-&gt;3)-alpha-D-Glc-(1-&gt;3)-alpha-D-Man-(1-&gt;2)-alpha-D-Man-(1-&gt;2)-alpha-D-Man-(1-&gt;3)-[alpha-D-Man-(1-&gt;2)-alpha-D-Man-(1-&gt;3)-[alpha-D-Man-(1-&gt;2)-alpha-D-Man-(1-&gt;6)]-alpha-D-Man-(1-&gt;6)]-beta-D-Man-(1-&gt;4)-beta-D-GlcNAc-(1-&gt;4)-beta-D-GlcNAc)-L-asparaginyl-[protein] + beta-D-glucose. Its pathway is glycan metabolism; N-glycan degradation. Functionally, in the context of N-glycan degradation, cleaves the distal alpha 1,2-linked glucose residue from the Glc(3)Man(9)GlcNAc(2) oligosaccharide precursor in a highly specific manner. The protein is Mannosyl-oligosaccharide glucosidase of Rattus norvegicus (Rat).